The following is a 153-amino-acid chain: 3-hydroxyacyl-[acyl-carrier-protein] dehydratase FabZ (153 aa).

The active site involves histidine 58.

Belongs to the thioester dehydratase family. FabZ subfamily.

It localises to the cytoplasm. The enzyme catalyses a (3R)-hydroxyacyl-[ACP] = a (2E)-enoyl-[ACP] + H2O. Involved in unsaturated fatty acids biosynthesis. Catalyzes the dehydration of short chain beta-hydroxyacyl-ACPs and long chain saturated and unsaturated beta-hydroxyacyl-ACPs. The protein is 3-hydroxyacyl-[acyl-carrier-protein] dehydratase FabZ of Bradyrhizobium diazoefficiens (strain JCM 10833 / BCRC 13528 / IAM 13628 / NBRC 14792 / USDA 110).